Consider the following 213-residue polypeptide: Protein FAM156A/FAM156B (213 aa).

M1 is subject to N-acetylmethionine. A disordered region spans residues 1–62 (MDPLQKRNPA…SQAVPLPEGL (62 aa)). Over residues 8 to 37 (NPASPSKSSPMTAAETSQEGPAPSQPSYSE) the composition is skewed to polar residues. S114 bears the Phosphoserine mark. The helical transmembrane segment at 154-170 (WETLVQGLSGLTLSLGT) threads the bilayer. The interval 165 to 198 (TLSLGTNQPGPLPEAALQPQETEEKRQRERQQES) is disordered. Positions 186–197 (TEEKRQRERQQE) are enriched in basic and acidic residues.

Its subcellular location is the membrane. This Homo sapiens (Human) protein is Protein FAM156A/FAM156B (FAM156A).